A 123-amino-acid polypeptide reads, in one-letter code: WAP four-disulfide core domain protein 5 (123 aa).

The signal sequence occupies residues 1 to 24; that stretch reads MRFWSLFLLVVLLAVGGQLPAASG. WAP domains are found at residues 27–74 and 75–121; these read KGER…VPRI and LVKR…RDPA. Disulfide bonds link C34-C62, C41-C66, C49-C61, C55-C70, C81-C109, C88-C113, C96-C108, and C102-C117.

It is found in the secreted. In terms of biological role, putative acid-stable proteinase inhibitor. The protein is WAP four-disulfide core domain protein 5 (WFDC5) of Lemur catta (Ring-tailed lemur).